The primary structure comprises 433 residues: N-lysine methyltransferase SMYD2 (433 aa).

The SET domain occupies 7 to 241 (GGLERFCSPG…PGEEVFTSYI (235 aa)). 17-19 (KGR) contacts S-adenosyl-L-methionine. Residues cysteine 52, cysteine 55, cysteine 65, cysteine 68, cysteine 74, cysteine 78, histidine 86, and cysteine 90 each contribute to the Zn(2+) site. The MYND-type zinc finger occupies 52–90 (CEFCFARKEGLSKCGRCKQAFYCNVECQKEDWPMHKLEC). S-adenosyl-L-methionine-binding positions include histidine 137, 206-207 (NH), and 258-260 (YFF).

Belongs to the class V-like SAM-binding methyltransferase superfamily. Interacts with RNA polymerase II and HELZ. Interacts with SIN3A and HDAC1. Interacts (via MYND-type zinc finger) with EPB41L3. Interacts (via SET domain) with p53/TP53. Interacts with RB1 and HSP90AA1.

The protein resides in the cytoplasm. It localises to the cytosol. It is found in the nucleus. The catalysed reaction is L-lysyl(4)-[histone H3] + 3 S-adenosyl-L-methionine = N(6),N(6),N(6)-trimethyl-L-lysyl(4)-[histone H3] + 3 S-adenosyl-L-homocysteine + 3 H(+). The enzyme catalyses L-lysyl-[protein] + S-adenosyl-L-methionine = N(6)-methyl-L-lysyl-[protein] + S-adenosyl-L-homocysteine + H(+). Protein-lysine N-methyltransferase that methylates both histones and non-histone proteins, including p53/TP53 and RB1. Specifically trimethylates histone H3 'Lys-4' (H3K4me3) in vivo. The activity requires interaction with HSP90alpha. Shows even higher methyltransferase activity on p53/TP53. Monomethylates 'Lys-370' of p53/TP53, leading to decreased DNA-binding activity and subsequent transcriptional regulation activity of p53/TP53. Monomethylates RB1 at 'Lys-860'. This Sus scrofa (Pig) protein is N-lysine methyltransferase SMYD2 (SMYD2).